A 280-amino-acid chain; its full sequence is Acetylglutamate kinase (280 aa).

Substrate-binding positions include 57-58 (GG), R79, and N174.

This sequence belongs to the acetylglutamate kinase family. ArgB subfamily.

It localises to the cytoplasm. It carries out the reaction N-acetyl-L-glutamate + ATP = N-acetyl-L-glutamyl 5-phosphate + ADP. Its pathway is amino-acid biosynthesis; L-arginine biosynthesis; N(2)-acetyl-L-ornithine from L-glutamate: step 2/4. In terms of biological role, catalyzes the ATP-dependent phosphorylation of N-acetyl-L-glutamate. This is Acetylglutamate kinase from Helicobacter hepaticus (strain ATCC 51449 / 3B1).